We begin with the raw amino-acid sequence, 875 residues long: Phosphoenolpyruvate carboxylase (875 aa).

Catalysis depends on residues His-137 and Lys-542.

This sequence belongs to the PEPCase type 1 family. It depends on Mg(2+) as a cofactor.

It carries out the reaction oxaloacetate + phosphate = phosphoenolpyruvate + hydrogencarbonate. In terms of biological role, forms oxaloacetate, a four-carbon dicarboxylic acid source for the tricarboxylic acid cycle. This Pseudomonas entomophila (strain L48) protein is Phosphoenolpyruvate carboxylase.